The sequence spans 182 residues: Protein GrpE (182 aa).

The interval 1 to 35 (MTQENQTPPPEQENLAADPAVETTAETPAVKTPEQ) is disordered.

It belongs to the GrpE family. In terms of assembly, homodimer.

The protein resides in the cytoplasm. Its function is as follows. Participates actively in the response to hyperosmotic and heat shock by preventing the aggregation of stress-denatured proteins, in association with DnaK and GrpE. It is the nucleotide exchange factor for DnaK and may function as a thermosensor. Unfolded proteins bind initially to DnaJ; upon interaction with the DnaJ-bound protein, DnaK hydrolyzes its bound ATP, resulting in the formation of a stable complex. GrpE releases ADP from DnaK; ATP binding to DnaK triggers the release of the substrate protein, thus completing the reaction cycle. Several rounds of ATP-dependent interactions between DnaJ, DnaK and GrpE are required for fully efficient folding. This chain is Protein GrpE, found in Polynucleobacter necessarius subsp. necessarius (strain STIR1).